We begin with the raw amino-acid sequence, 389 residues long: Succinate--CoA ligase [ADP-forming] subunit beta (389 aa).

The ATP-grasp domain occupies 9-244 (KQLFAEYGLP…PSQEDEREAH (236 aa)). ATP is bound by residues K46, 53 to 55 (GRG), E99, T102, and E107. Residues N199 and D213 each contribute to the Mg(2+) site. Substrate contacts are provided by residues N264 and 321–323 (GIV).

It belongs to the succinate/malate CoA ligase beta subunit family. Heterotetramer of two alpha and two beta subunits. Mg(2+) serves as cofactor.

The catalysed reaction is succinate + ATP + CoA = succinyl-CoA + ADP + phosphate. The enzyme catalyses GTP + succinate + CoA = succinyl-CoA + GDP + phosphate. It participates in carbohydrate metabolism; tricarboxylic acid cycle; succinate from succinyl-CoA (ligase route): step 1/1. In terms of biological role, succinyl-CoA synthetase functions in the citric acid cycle (TCA), coupling the hydrolysis of succinyl-CoA to the synthesis of either ATP or GTP and thus represents the only step of substrate-level phosphorylation in the TCA. The beta subunit provides nucleotide specificity of the enzyme and binds the substrate succinate, while the binding sites for coenzyme A and phosphate are found in the alpha subunit. The protein is Succinate--CoA ligase [ADP-forming] subunit beta of Teredinibacter turnerae (strain ATCC 39867 / T7901).